A 121-amino-acid chain; its full sequence is Large ribosomal subunit protein uL18 (121 aa).

The protein belongs to the universal ribosomal protein uL18 family. Part of the 50S ribosomal subunit; part of the 5S rRNA/L5/L18/L25 subcomplex. Contacts the 5S and 23S rRNAs.

Its function is as follows. This is one of the proteins that bind and probably mediate the attachment of the 5S RNA into the large ribosomal subunit, where it forms part of the central protuberance. The sequence is that of Large ribosomal subunit protein uL18 from Moorella thermoacetica (strain ATCC 39073 / JCM 9320).